A 318-amino-acid polypeptide reads, in one-letter code: Protein disulfide-isomerase MPD1 (318 aa).

A signal peptide spans 1-21 (MLFLNIIKLLLGLFIMNEVKA). The Thioredoxin domain occupies 22–158 (QNFYDSDPHI…SLSRIRSYVK (137 aa)). Residue N47 is glycosylated (N-linked (GlcNAc...) asparagine). C59 and C62 are disulfide-bonded. N307 carries an N-linked (GlcNAc...) asparagine glycan. The short motif at 315–318 (HDEL) is the Prevents secretion from ER element.

This sequence belongs to the protein disulfide isomerase family. As to quaternary structure, interacts with CNE1 and EPS1.

Its subcellular location is the endoplasmic reticulum lumen. The enzyme catalyses Catalyzes the rearrangement of -S-S- bonds in proteins.. Participates in the folding of proteins containing disulfide bonds. The sequence is that of Protein disulfide-isomerase MPD1 (MPD1) from Saccharomyces cerevisiae (strain ATCC 204508 / S288c) (Baker's yeast).